The primary structure comprises 571 residues: Dihydroxy-acid dehydratase (571 aa).

Residue C56 participates in [2Fe-2S] cluster binding. D88 lines the Mg(2+) pocket. Residue C129 coordinates [2Fe-2S] cluster. Residues D130 and K131 each contribute to the Mg(2+) site. The residue at position 131 (K131) is an N6-carboxylysine. C201 provides a ligand contact to [2Fe-2S] cluster. E452 is a binding site for Mg(2+). S478 (proton acceptor) is an active-site residue.

This sequence belongs to the IlvD/Edd family. Homodimer. [2Fe-2S] cluster serves as cofactor. Requires Mg(2+) as cofactor.

It carries out the reaction (2R)-2,3-dihydroxy-3-methylbutanoate = 3-methyl-2-oxobutanoate + H2O. The catalysed reaction is (2R,3R)-2,3-dihydroxy-3-methylpentanoate = (S)-3-methyl-2-oxopentanoate + H2O. It functions in the pathway amino-acid biosynthesis; L-isoleucine biosynthesis; L-isoleucine from 2-oxobutanoate: step 3/4. It participates in amino-acid biosynthesis; L-valine biosynthesis; L-valine from pyruvate: step 3/4. Functions in the biosynthesis of branched-chain amino acids. Catalyzes the dehydration of (2R,3R)-2,3-dihydroxy-3-methylpentanoate (2,3-dihydroxy-3-methylvalerate) into 2-oxo-3-methylpentanoate (2-oxo-3-methylvalerate) and of (2R)-2,3-dihydroxy-3-methylbutanoate (2,3-dihydroxyisovalerate) into 2-oxo-3-methylbutanoate (2-oxoisovalerate), the penultimate precursor to L-isoleucine and L-valine, respectively. The sequence is that of Dihydroxy-acid dehydratase from Streptococcus mutans serotype c (strain ATCC 700610 / UA159).